The primary structure comprises 388 residues: Beta-hexosaminidase LpqI (388 aa).

Residues 1-19 form the signal peptide; that stretch reads MAFPRTLAILAAAAALVVA. Cys20 carries the N-palmitoyl cysteine lipid modification. A lipid anchor (S-diacylglycerol cysteine) is attached at Cys20. Residues Asp123, Arg131, Arg193, and 223 to 224 each bind substrate; that span reads KH. His236 acts as the Proton donor/acceptor in catalysis. Asp311 serves as the catalytic Nucleophile.

It belongs to the glycosyl hydrolase 3 family.

The protein resides in the cell inner membrane. The enzyme catalyses Hydrolysis of terminal non-reducing N-acetyl-D-hexosamine residues in N-acetyl-beta-D-hexosaminides.. Its pathway is cell wall biogenesis; peptidoglycan recycling. Plays a role in peptidoglycan recycling by cleaving the terminal beta-1,4-linked N-acetylglucosamine (GlcNAc) from peptidoglycan fragments. Acts as a regulator for GlcNAc-MurNAc levels by cleaving disaccharides and allowing the breakdown of MurNAc. This chain is Beta-hexosaminidase LpqI, found in Mycobacterium tuberculosis (strain ATCC 25618 / H37Rv).